We begin with the raw amino-acid sequence, 388 residues long: Acetate kinase (388 aa).

Asn-7 contacts Mg(2+). Lys-14 serves as a coordination point for ATP. Arg-76 provides a ligand contact to substrate. Residue Asp-133 is the Proton donor/acceptor of the active site. ATP-binding positions include 193-197 (HLGNG), 267-269 (DMR), and 315-319 (GIGEN). Residue Glu-374 participates in Mg(2+) binding.

It belongs to the acetokinase family. Homodimer. The cofactor is Mg(2+). It depends on Mn(2+) as a cofactor.

Its subcellular location is the cytoplasm. It catalyses the reaction acetate + ATP = acetyl phosphate + ADP. Its pathway is metabolic intermediate biosynthesis; acetyl-CoA biosynthesis; acetyl-CoA from acetate: step 1/2. Functionally, catalyzes the formation of acetyl phosphate from acetate and ATP. Can also catalyze the reverse reaction. The chain is Acetate kinase from Micrococcus luteus (strain ATCC 4698 / DSM 20030 / JCM 1464 / CCM 169 / CCUG 5858 / IAM 1056 / NBRC 3333 / NCIMB 9278 / NCTC 2665 / VKM Ac-2230) (Micrococcus lysodeikticus).